Consider the following 184-residue polypeptide: MMTPENDEEQTSVFSATVYGDKIQGKNKRKRVIGICIRISMVISLLSMITMSAFLIVRLNQCMSANEAAITDATAVAAALSTHRKVASSTTQYKHQESCNGLYYQGSCYIFHSDYQLFSDAKANCATESSTLPNKSDVLTTWLIDYVEDTWGSDGNPITKTTTDYQDSDVSQEVRKYFCVKTMN.

At 1–33 (MMTPENDEEQTSVFSATVYGDKIQGKNKRKRVI) the chain is on the intravirion side. The chain crosses the membrane as a helical span at residues 34–56 (GICIRISMVISLLSMITMSAFLI). The Virion surface segment spans residues 57 to 184 (VRLNQCMSAN…RKYFCVKTMN (128 aa)). The tract at residues 98–184 (SCNGLYYQGS…RKYFCVKTMN (87 aa)) is C-type lectin-like domain. N-linked (GlcNAc...) asparagine; by host glycosylation is present at Asn134.

This sequence belongs to the orthopoxvirus OPG161 family. As to quaternary structure, homodimer, disulfide-linked. Interacts with protein OPG190. Interacts (via C-terminus) with protein OPG164. Interacts with OPG162.

It localises to the virion membrane. Its subcellular location is the host membrane. Forms a complex with OPG162 and OPG190 to coordinate the incorporation of OPG164 into wrapped enveloped virion (EV) membranes and, subsequently, the production of actin tails. Therefore plays an essential role in efficient cell-to-cell spread of viral particles. In Homo sapiens (Human), this protein is Protein OPG161 (OPG161).